The primary structure comprises 653 residues: Multidomain regulatory protein MT1410 (653 aa).

The PAC domain occupies 86-142 (SGSEWRLQTDYDGSGVEERYFDFVVTPRRRADGSIEGVQLIVDDVTSRVRARQAAEA). The region spanning 177–396 (DIAAEYLVAA…DDVTLLAMQR (220 aa)) is the PPM-type phosphatase domain. Mn(2+)-binding residues include D211, V212, D328, and D387. The anti-sigma factor kinase region stretch occupies residues 397–544 (RAPTPPLHIT…TMVRRAAFQQ (148 aa)). The STAS domain occupies 546–653 (IDSEFVSLVE…ADTEDIFAQE (108 aa)). Phosphoserine is present on S600.

Mg(2+) serves as cofactor. It depends on Mn(2+) as a cofactor. In terms of processing, autophosphorylated.

It carries out the reaction O-phospho-L-seryl-[protein] + H2O = L-seryl-[protein] + phosphate. The enzyme catalyses O-phospho-L-threonyl-[protein] + H2O = L-threonyl-[protein] + phosphate. The catalysed reaction is L-seryl-[protein] + ATP = O-phospho-L-seryl-[protein] + ADP + H(+). It catalyses the reaction L-threonyl-[protein] + ATP = O-phospho-L-threonyl-[protein] + ADP + H(+). Primarily acts as an independent SigF regulator that is sensitive to the osmosensory signal, mediating the cross talk of PknD with the SigF regulon. Possesses both phosphatase and kinase activities. The kinase domain functions as a classic anti-sigma factor-like kinase to phosphorylate the anti-anti-sigma factor domain at the canonical regulatory site, and the phosphatase domain antagonizes this activity. This is Multidomain regulatory protein MT1410 from Mycobacterium tuberculosis (strain CDC 1551 / Oshkosh).